The chain runs to 101 residues: Protein Tat (101 aa).

The interaction with human CREBBP stretch occupies residues 1–24 (MEPVDPNLEPWNHPGSQPKTACNN). Residues 1–48 (MEPVDPNLEPWNHPGSQPKTACNNCYCKRCSYHCLVCFQTKGLGISYG) are transactivation. 3 residues coordinate Zn(2+): C22, C25, and C27. The tract at residues 22-37 (CNNCYCKRCSYHCLVC) is cysteine-rich. K28 carries the post-translational modification N6-acetyllysine; by host PCAF. The Zn(2+) site is built by C30, H33, C34, and C37. The interval 38-48 (FQTKGLGISYG) is core. The tract at residues 47-101 (YGRKKRRQRRSAPPSSEDHQNPIPKQPLPQTRGDQTGSEESKKKVESKTETDPFD) is disordered. Residues 49-57 (RKKRRQRRS) carry the Nuclear localization signal, RNA-binding (TAR), and protein transduction motif. An interaction with the host capping enzyme RNGTT region spans residues 49–86 (RKKRRQRRSAPPSSEDHQNPIPKQPLPQTRGDQTGSEE). Residues K50 and K51 each carry the N6-acetyllysine; by host EP300 and GCN5L2 modification. R52 and R53 each carry asymmetric dimethylarginine; by host PRMT6. A Glycyl lysine isopeptide (Lys-Gly) (interchain with G-Cter in ubiquitin) cross-link involves residue K71. Residues 78 to 80 (RGD) carry the Cell attachment site motif. Residues 85-101 (EESKKKVESKTETDPFD) are compositionally biased toward basic and acidic residues.

The protein belongs to the lentiviruses Tat family. As to quaternary structure, interacts with host CCNT1. Associates with the P-TEFb complex composed at least of Tat, P-TEFb (CDK9 and CCNT1), TAR RNA, RNA Pol II. Recruits the HATs CREBBP, TAF1/TFIID, EP300, PCAF and GCN5L2. Interacts with host KAT5/Tip60; this interaction targets the latter to degradation. Interacts with the host deacetylase SIRT1. Interacts with host capping enzyme RNGTT; this interaction stimulates RNGTT. Binds to host KDR, and to the host integrins ITGAV/ITGB3 and ITGA5/ITGB1. Interacts with host KPNB1/importin beta-1 without previous binding to KPNA1/importin alpha-1. Interacts with EIF2AK2. Interacts with host nucleosome assembly protein NAP1L1; this interaction may be required for the transport of Tat within the nucleus, since the two proteins interact at the nuclear rim. Interacts with host C1QBP/SF2P32; this interaction involves lysine-acetylated Tat. Interacts with the host chemokine receptors CCR2, CCR3 and CXCR4. Interacts with host DPP4/CD26; this interaction may trigger an anti-proliferative effect. Interacts with host LDLR. Interacts with the host extracellular matrix metalloproteinase MMP1. Interacts with host PRMT6; this interaction mediates Tat's methylation. Interacts with, and is ubiquitinated by MDM2/Hdm2. Interacts with host PSMC3 and HTATIP2. Interacts with STAB1; this interaction may overcome SATB1-mediated repression of IL2 and IL2RA (interleukin) in T cells by binding to the same domain than HDAC1. Interacts (when acetylated) with human CDK13, thereby increasing HIV-1 mRNA splicing and promoting the production of the doubly spliced HIV-1 protein Nef. Interacts with host TBP; this interaction modulates the activity of transcriptional pre-initiation complex. Interacts with host RELA. Interacts with host PLSCR1; this interaction negatively regulates Tat transactivation activity by altering its subcellular distribution. Asymmetrical arginine methylation by host PRMT6 seems to diminish the transactivation capacity of Tat and affects the interaction with host CCNT1. Post-translationally, acetylation by EP300, CREBBP, GCN5L2/GCN5 and PCAF regulates the transactivation activity of Tat. EP300-mediated acetylation of Lys-50 promotes dissociation of Tat from the TAR RNA through the competitive binding to PCAF's bromodomain. In addition, the non-acetylated Tat's N-terminus can also interact with PCAF. PCAF-mediated acetylation of Lys-28 enhances Tat's binding to CCNT1. Lys-50 is deacetylated by SIRT1. In terms of processing, polyubiquitination by host MDM2 does not target Tat to degradation, but activates its transactivation function and fosters interaction with CCNT1 and TAR RNA. Phosphorylated by EIF2AK2 on serine and threonine residues adjacent to the basic region important for TAR RNA binding and function. Phosphorylation of Tat by EIF2AK2 is dependent on the prior activation of EIF2AK2 by dsRNA.

The protein localises to the host nucleus. It is found in the host nucleolus. It localises to the host cytoplasm. Its subcellular location is the secreted. Functionally, transcriptional activator that increases RNA Pol II processivity, thereby increasing the level of full-length viral transcripts. Recognizes a hairpin structure at the 5'-LTR of the nascent viral mRNAs referred to as the transactivation responsive RNA element (TAR) and recruits the cyclin T1-CDK9 complex (P-TEFb complex) that will in turn hyperphosphorylate the RNA polymerase II to allow efficient elongation. The CDK9 component of P-TEFb and other Tat-activated kinases hyperphosphorylate the C-terminus of RNA Pol II that becomes stabilized and much more processive. Other factors such as HTATSF1/Tat-SF1, SUPT5H/SPT5, and HTATIP2 are also important for Tat's function. Besides its effect on RNA Pol II processivity, Tat induces chromatin remodeling of proviral genes by recruiting the histone acetyltransferases (HATs) CREBBP, EP300 and PCAF to the chromatin. This also contributes to the increase in proviral transcription rate, especially when the provirus integrates in transcriptionally silent region of the host genome. To ensure maximal activation of the LTR, Tat mediates nuclear translocation of NF-kappa-B by interacting with host RELA. Through its interaction with host TBP, Tat may also modulate transcription initiation. Tat can reactivate a latently infected cell by penetrating in it and transactivating its LTR promoter. In the cytoplasm, Tat is thought to act as a translational activator of HIV-1 mRNAs. Extracellular circulating Tat can be endocytosed by surrounding uninfected cells via the binding to several surface receptors such as CD26, CXCR4, heparan sulfate proteoglycans (HSPG) or LDLR. Neurons are rarely infected, but they internalize Tat via their LDLR. Through its interaction with nuclear HATs, Tat is potentially able to control the acetylation-dependent cellular gene expression. Modulates the expression of many cellular genes involved in cell survival, proliferation or in coding for cytokines or cytokine receptors. Tat plays a role in T-cell and neurons apoptosis. Tat induced neurotoxicity and apoptosis probably contribute to neuroAIDS. Circulating Tat also acts as a chemokine-like and/or growth factor-like molecule that binds to specific receptors on the surface of the cells, affecting many cellular pathways. In the vascular system, Tat binds to ITGAV/ITGB3 and ITGA5/ITGB1 integrins dimers at the surface of endothelial cells and competes with bFGF for heparin-binding sites, leading to an excess of soluble bFGF. The sequence is that of Protein Tat from Human immunodeficiency virus type 1 group M subtype C (isolate 92BR025) (HIV-1).